The primary structure comprises 129 residues: Small ribosomal subunit protein uS11 (129 aa).

This sequence belongs to the universal ribosomal protein uS11 family. In terms of assembly, part of the 30S ribosomal subunit. Interacts with proteins S7 and S18. Binds to IF-3.

Located on the platform of the 30S subunit, it bridges several disparate RNA helices of the 16S rRNA. Forms part of the Shine-Dalgarno cleft in the 70S ribosome. The polypeptide is Small ribosomal subunit protein uS11 (Bradyrhizobium sp. (strain BTAi1 / ATCC BAA-1182)).